The following is a 468-amino-acid chain: Ribulose bisphosphate carboxylase large chain (468 aa).

At Lys-5 the chain carries N6,N6,N6-trimethyllysine. The substrate site is built by Asn-114 and Thr-164. Residue Lys-166 is the Proton acceptor of the active site. Residue Lys-168 coordinates substrate. Residues Lys-192, Asp-194, and Glu-195 each contribute to the Mg(2+) site. N6-carboxylysine is present on Lys-192. His-285 (proton acceptor) is an active-site residue. Positions 286, 318, and 370 each coordinate substrate.

The protein belongs to the RuBisCO large chain family. Type I subfamily. Heterohexadecamer of 8 large chains and 8 small chains; disulfide-linked. The disulfide link is formed within the large subunit homodimers. Mg(2+) serves as cofactor. In terms of processing, the disulfide bond which can form in the large chain dimeric partners within the hexadecamer appears to be associated with oxidative stress and protein turnover.

The protein resides in the plastid. It is found in the chloroplast. The enzyme catalyses 2 (2R)-3-phosphoglycerate + 2 H(+) = D-ribulose 1,5-bisphosphate + CO2 + H2O. It catalyses the reaction D-ribulose 1,5-bisphosphate + O2 = 2-phosphoglycolate + (2R)-3-phosphoglycerate + 2 H(+). Functionally, ruBisCO catalyzes two reactions: the carboxylation of D-ribulose 1,5-bisphosphate, the primary event in carbon dioxide fixation, as well as the oxidative fragmentation of the pentose substrate in the photorespiration process. Both reactions occur simultaneously and in competition at the same active site. The protein is Ribulose bisphosphate carboxylase large chain of Anthospermum herbaceum.